The primary structure comprises 381 residues: Acetylornithine deacetylase (381 aa).

H79 is a Zn(2+) binding site. Residue D81 is part of the active site. D111 provides a ligand contact to Zn(2+). The active site involves E143. Residues E144, E168, and H354 each coordinate Zn(2+).

It belongs to the peptidase M20A family. ArgE subfamily. In terms of assembly, homodimer. Zn(2+) serves as cofactor. The cofactor is Co(2+). It depends on glutathione as a cofactor.

It localises to the cytoplasm. It catalyses the reaction N(2)-acetyl-L-ornithine + H2O = L-ornithine + acetate. It participates in amino-acid biosynthesis; L-arginine biosynthesis; L-ornithine from N(2)-acetyl-L-ornithine (linear): step 1/1. Its function is as follows. Catalyzes the hydrolysis of the amide bond of N(2)-acetylated L-amino acids. Cleaves the acetyl group from N-acetyl-L-ornithine to form L-ornithine, an intermediate in L-arginine biosynthesis pathway, and a branchpoint in the synthesis of polyamines. This is Acetylornithine deacetylase from Buchnera aphidicola subsp. Acyrthosiphon pisum (strain 5A).